Reading from the N-terminus, the 256-residue chain is 5-keto-4-deoxy-D-glucarate aldolase (256 aa).

His-50 serves as the catalytic Proton acceptor. Residue Gln-151 participates in substrate binding. Glu-153 lines the Mg(2+) pocket. Substrate-binding residues include Ser-178 and Asp-179. Asp-179 is a binding site for Mg(2+).

Belongs to the HpcH/HpaI aldolase family. KDGluc aldolase subfamily. In terms of assembly, homohexamer; trimer of dimers. Mg(2+) serves as cofactor.

The catalysed reaction is 5-dehydro-4-deoxy-D-glucarate = 2-hydroxy-3-oxopropanoate + pyruvate. It carries out the reaction 2-dehydro-3-deoxy-D-glucarate = 2-hydroxy-3-oxopropanoate + pyruvate. Its pathway is carbohydrate acid metabolism; galactarate degradation; D-glycerate from galactarate: step 2/3. Functionally, catalyzes the reversible retro-aldol cleavage of both 5-keto-4-deoxy-D-glucarate and 2-keto-3-deoxy-D-glucarate to pyruvate and tartronic semialdehyde. This chain is 5-keto-4-deoxy-D-glucarate aldolase, found in Enterobacter sp. (strain 638).